Here is an 87-residue protein sequence, read N- to C-terminus: Potassium channel toxin Tdi-beta-KTx (87 aa).

Positions 1 to 19 (MERKLALLLLLGMITLASS) are cleaved as a signal peptide. Residues 20-27 (GLREKHVQ) constitute a propeptide that is removed on maturation. The BetaSPN-type CS-alpha/beta domain maps to 53 to 87 (QFGCPAYEGYCMNHCQDIERHDGSCHGFKCKCEKS). Intrachain disulfides connect cysteine 56-cysteine 77, cysteine 63-cysteine 82, and cysteine 67-cysteine 84.

In terms of tissue distribution, expressed by the venom gland.

It is found in the secreted. In terms of biological role, inhibits voltage-gated potassium channel. This Tityus discrepans (Venezuelan scorpion) protein is Potassium channel toxin Tdi-beta-KTx.